The sequence spans 406 residues: Mitochondrial ribosome-associated GTPase 2 (406 aa).

The segment at 15–406 is localized in the mitochondria; sequence FEGVGHWALS…LGQGRQPLRW (392 aa). The segment at 30-406 is not localized in the mitochondria; it reads KPSRLLPQQA…LGQGRQPLRW (377 aa). The Obg domain occupies 70–224; sequence RYFVDYRRVL…RVLHLELKTV (155 aa). The OBG-type G domain maps to 225–390; that stretch reads AHAGMVGFPN…LLLHLKVLYD (166 aa). Residues 231–238, 256–260, 278–281, 345–348, and 371–373 each bind GTP; these read GFPNAGKS, FTTLK, DIPG, NKID, and SAL. Ser-238 and Thr-258 together coordinate Mg(2+).

This sequence belongs to the TRAFAC class OBG-HflX-like GTPase superfamily. OBG GTPase family. As to quaternary structure, associates with the mitochondrial ribosome large subunit; the association occurs in a GTP-dependent manner. The cofactor is Mg(2+).

The protein resides in the mitochondrion. It is found in the mitochondrion inner membrane. Functionally, plays a role in the regulation of the mitochondrial ribosome assembly and of translational activity. Displays GTPase activity. Involved in the ribosome maturation process. The sequence is that of Mitochondrial ribosome-associated GTPase 2 (MTG2) from Pongo abelii (Sumatran orangutan).